The chain runs to 385 residues: Odorant receptor 82a (385 aa).

Residues 1-32 (MGRLFQLQEYCLRAMGHKDDMDSTDSTALSLK) are Cytoplasmic-facing. Residues 33–53 (HISSLIFVISAQYPLISYVAY) form a helical membrane-spanning segment. Topologically, residues 54 to 62 (NRNDMEKVT) are extracellular. Residues 63-83 (ACLSVVFTNMLTVIKISTFLA) form a helical membrane-spanning segment. The Cytoplasmic segment spans residues 84–131 (NRKDFWEMIHRFRKMHEQSASHIPRYREGLDYVAEANKLASFLGRAYC). The chain crosses the membrane as a helical span at residues 132-152 (VSCGLTGLYFMLGPIVKIGVC). Residues 153–186 (RWHGTTCDKELPMPMKFPFNDLESPGYEVCFLYT) lie on the Extracellular side of the membrane. The helical transmembrane segment at 187–207 (VLVTVVVVAYASAVDGLFISF) threads the bilayer. Over 208–257 (AINLRAHFQTLQRQIENWEFPSSEPDTQIRLKSIVEYHVLLLSLSRKLRS) the chain is Cytoplasmic. Residues 258-278 (IYTPTVMGQFVITSLQVGVII) traverse the membrane as a helical segment. Over 279–290 (YQLVTNMDSVMD) the chain is Extracellular. A helical transmembrane segment spans residues 291–311 (LLLYASFFGSIMLQLFIYCYG). The Cytoplasmic segment spans residues 312–357 (GEIIKAESLQVDTAVRLSNWHLASPKTRTSLSLIILQSQKEVLIRA). A helical membrane pass occupies residues 358–378 (GFFVASLANFVGICRTALSLI). Topologically, residues 379 to 385 (TLIKSIE) are extracellular.

It belongs to the insect chemoreceptor superfamily. Heteromeric odorant receptor channel (TC 1.A.69) family. Or1a subfamily. Interacts with Orco. Complexes exist early in the endomembrane system in olfactory sensory neurons (OSNs), coupling these complexes to the conserved ciliary trafficking pathway. In terms of tissue distribution, expressed in olfactory sensory neurons in the antenna.

It is found in the cell membrane. In terms of biological role, odorant receptor which mediates acceptance or avoidance behavior, depending on its substrates. The odorant receptor repertoire encodes a large collection of odor stimuli that vary widely in identity, intensity, and duration. May form a complex with Orco to form odorant-sensing units, providing sensitive and prolonged odorant signaling and calcium permeability. The polypeptide is Odorant receptor 82a (Or82a) (Drosophila melanogaster (Fruit fly)).